The following is a 209-amino-acid chain: Uracil phosphoribosyltransferase (209 aa).

5-phospho-alpha-D-ribose 1-diphosphate contacts are provided by residues Arg-79, Arg-104, and 131–139 (DPMLATGNS). Uracil is bound by residues Ile-194 and 199 to 201 (GDA). Asp-200 is a binding site for 5-phospho-alpha-D-ribose 1-diphosphate.

This sequence belongs to the UPRTase family. Mg(2+) serves as cofactor.

The catalysed reaction is UMP + diphosphate = 5-phospho-alpha-D-ribose 1-diphosphate + uracil. Its pathway is pyrimidine metabolism; UMP biosynthesis via salvage pathway; UMP from uracil: step 1/1. Its activity is regulated as follows. Allosterically activated by GTP. Catalyzes the conversion of uracil and 5-phospho-alpha-D-ribose 1-diphosphate (PRPP) to UMP and diphosphate. This chain is Uracil phosphoribosyltransferase, found in Sinorhizobium fredii (strain NBRC 101917 / NGR234).